The primary structure comprises 307 residues: Lipid droplet-associated hydrolase (307 aa).

Catalysis depends on S119, which acts as the Nucleophile. The interval 157–200 (GWVFTKVAMPLYSVFGYIFFSFFNFLPVWLRLMLIQIYFLIFSI) is potential amphipathic helix required for binding to lipid droplets. 2 consecutive transmembrane segments (helical) span residues 166 to 186 (PLYS…PVWL) and 188 to 208 (LMLI…LGTA). Active-site charge relay system residues include D254 and H283.

The protein belongs to the AB hydrolase superfamily. LDAH family. In terms of assembly, interacts with the juvenile hormone hydrolase enzymes Jheh1 and Jheh2. Also interacts with Hmu, Cpr, Gp93 and Pvr. In terms of tissue distribution, expressed in accessory glands.

It localises to the lipid droplet. Its subcellular location is the endoplasmic reticulum membrane. The catalysed reaction is a cholesterol ester + H2O = cholesterol + a fatty acid + H(+). Its function is as follows. Probable serine lipid hydrolase associated with lipid droplets. Appears to lack or have very low cholesterol esterase activity. Appears to lack triglyceride lipase activity. Involved in cholesterol and triglyceride homeostasis; stimulates cellular triglyceride accumulation and cellular cholesterol release. Involved in negatively regulating juvenile hormone (JH) and possibly, insulin signaling activities such as triacylglycerols (TAG) storage, and thereby plays a role in the endocrine regulation of organismal growth and survival. Likely functions by enhancing the activity of the JH hydrolase enzymes Jheh1 and Jheh2. Required for lipid droplet positioning and fat storage. In Drosophila melanogaster (Fruit fly), this protein is Lipid droplet-associated hydrolase.